The chain runs to 348 residues: Sulfate/thiosulfate import ATP-binding protein CysA (348 aa).

Positions 3-233 (ILIDNISKKF…PATPFVFSLL (231 aa)) constitute an ABC transporter domain. Residue 35-42 (GPSGSGKS) coordinates ATP.

Belongs to the ABC transporter superfamily. Sulfate/tungstate importer (TC 3.A.1.6) family.

It is found in the plastid. The protein localises to the chloroplast. The enzyme catalyses sulfate(out) + ATP + H2O = sulfate(in) + ADP + phosphate + H(+). It catalyses the reaction thiosulfate(out) + ATP + H2O = thiosulfate(in) + ADP + phosphate + H(+). Its function is as follows. Part of the ABC transporter complex involved in sulfate/thiosulfate import. Responsible for energy coupling to the transport system. The chain is Sulfate/thiosulfate import ATP-binding protein CysA from Mesostigma viride (Green alga).